Here is a 444-residue protein sequence, read N- to C-terminus: 3-phosphoshikimate 1-carboxyvinyltransferase (444 aa).

3-phosphoshikimate-binding residues include Lys29, Ser30, and Arg34. Lys29 contacts phosphoenolpyruvate. Residues Gly103 and Arg132 each coordinate phosphoenolpyruvate. 3-phosphoshikimate-binding residues include Ser177, Gln179, Asp329, and Lys356. Gln179 serves as a coordination point for phosphoenolpyruvate. The active-site Proton acceptor is the Asp329. Phosphoenolpyruvate-binding residues include Arg360 and Arg402.

It belongs to the EPSP synthase family. In terms of assembly, monomer.

The protein localises to the cytoplasm. It catalyses the reaction 3-phosphoshikimate + phosphoenolpyruvate = 5-O-(1-carboxyvinyl)-3-phosphoshikimate + phosphate. It functions in the pathway metabolic intermediate biosynthesis; chorismate biosynthesis; chorismate from D-erythrose 4-phosphate and phosphoenolpyruvate: step 6/7. Functionally, catalyzes the transfer of the enolpyruvyl moiety of phosphoenolpyruvate (PEP) to the 5-hydroxyl of shikimate-3-phosphate (S3P) to produce enolpyruvyl shikimate-3-phosphate and inorganic phosphate. This chain is 3-phosphoshikimate 1-carboxyvinyltransferase, found in Prochlorococcus marinus (strain NATL2A).